Here is a 313-residue protein sequence, read N- to C-terminus: Porphobilinogen deaminase (313 aa).

C242 carries the S-(dipyrrolylmethanemethyl)cysteine modification.

Belongs to the HMBS family. Monomer. The cofactor is dipyrromethane.

The enzyme catalyses 4 porphobilinogen + H2O = hydroxymethylbilane + 4 NH4(+). The protein operates within porphyrin-containing compound metabolism; protoporphyrin-IX biosynthesis; coproporphyrinogen-III from 5-aminolevulinate: step 2/4. In terms of biological role, tetrapolymerization of the monopyrrole PBG into the hydroxymethylbilane pre-uroporphyrinogen in several discrete steps. This chain is Porphobilinogen deaminase (hemC), found in Proteus mirabilis.